The following is an 812-amino-acid chain: MTGIEQKTPVGGSETGGADGLYAVLPLRDIVVFPHMIVPLFVGREKSIRALEEVMGVDKQILLATQKNAADDDPAPDAIYEIGTIANVLQLLKLPDGTVKVLVEGTARAKISKFTDREDYHEAYAAALQEPEEDAVEIEALARSVVSDFENYVKLNKKISPEVVGAASQIDDYSKLADTVASHLAIKIPEKQEMLSVLSVRERLEKALSFMEAEISVLQVEKRIRSRVKRQMEKTQREYYLNEQMKAIQKELGDSEDGRDEVAEIEERITKTKLSKEAREKALAELKKLRSMSPMSAEATVVRNYLDWLLSIPWGKKSKVKQDLNFAQEVLDAEHFGLGKVKERIVGYLAVQARSTKIKGPILCLVGPPGVGKTSLARSIAKATGREYVRMSLGGVRDEAEIRGHRRTYIGSMPGKVIQSMKKAKKSNPLFLLDEIDKMGQDFRGDPSSAMLEVLDPEQNATFMDHYLEVEYDLSNVMFVTTANTMNIPGPLLDRMEIIRIAGYTEDEKLEIAKRHLLPKAIKDHALQPKEFSVTEDALRNVIRHYTREAGVRSLEREVMTLARKAVTEILKTKKKSVKITDKNLSDYLGVEKFRFGQIDGEDQVGVVTGLAWTEVGGELLTIEGVMMPGKGRMTVTGNLRDVMKESISAAASYVRSRAIDFGIEPPLFDKRDIHVHVPEGATPKDGPSAGIAMVTAIVSVLTGIPVRKDIAMTGEVTLRGRVLPIGGLKEKLLAALRGGIKKVLIPEENAKDLAEIPDNVKNNLEIVPVSRVGEVLKHTLVRQPEPIEWTEQENPTAVPPVEDEAGASLAH.

A Lon N-terminal domain is found at 22–215 (YAVLPLRDIV…KALSFMEAEI (194 aa)). Residue 367 to 374 (GPPGVGKT) participates in ATP binding. Residues 602 to 783 (EDQVGVVTGL…GEVLKHTLVR (182 aa)) enclose the Lon proteolytic domain. Active-site residues include Ser689 and Lys732. Positions 787–812 (PIEWTEQENPTAVPPVEDEAGASLAH) are disordered.

This sequence belongs to the peptidase S16 family. In terms of assembly, homohexamer. Organized in a ring with a central cavity.

The protein resides in the cytoplasm. The catalysed reaction is Hydrolysis of proteins in presence of ATP.. In terms of biological role, ATP-dependent serine protease that mediates the selective degradation of mutant and abnormal proteins as well as certain short-lived regulatory proteins. Required for cellular homeostasis and for survival from DNA damage and developmental changes induced by stress. Degrades polypeptides processively to yield small peptide fragments that are 5 to 10 amino acids long. Binds to DNA in a double-stranded, site-specific manner. The chain is Lon protease from Brucella suis biovar 1 (strain 1330).